Consider the following 68-residue polypeptide: U2-agatoxin-Ao1u (68 aa).

An N-terminal signal peptide occupies residues 1–20 (MKAIISLLLISAMVFSMIEA). Residues 21-34 (VPLEEGLQLFEGER) constitute a propeptide that is removed on maturation. Cystine bridges form between cysteine 36–cysteine 52, cysteine 43–cysteine 57, and cysteine 51–cysteine 67.

The protein belongs to the neurotoxin 01 (U2-agtx) family. As to expression, expressed by the venom gland.

The protein localises to the secreted. In terms of biological role, insect active toxin causing rapid but reversible paralysis in crickets. No activity shown in mammals. Does not show effect on mammalian voltage-gated calcium channels. This chain is U2-agatoxin-Ao1u, found in Agelena orientalis (Funnel-web spider).